A 364-amino-acid polypeptide reads, in one-letter code: Formate dehydrogenase (364 aa).

Val-93 and Asn-119 together coordinate substrate. Residues 174–175, Asp-195, 230–234, Thr-256, Asp-282, and 311–314 each bind NAD(+); these read RI, PLHAG, and HYSG.

This sequence belongs to the D-isomer specific 2-hydroxyacid dehydrogenase family. FDH subfamily. Homodimer.

The protein resides in the cytoplasm. The enzyme catalyses formate + NAD(+) = CO2 + NADH. Its activity is regulated as follows. Cu(2+), Hg and p-chloromercuribenzoate are strong inhibitors of enzyme activity and Ca(2+), Mg(2+), Zn(2+), Mn(2+), Cd(2+) and Sn(2+) have no effect on activity indicating a cysteine residue in the protein is essential for enzyme activity or to maintain the proper structure of the enzyme. Nitrite and nitrate inhibit some enzyme activity, however cyanide, azide, thiocyanate and cyanate are strong inhibitors of the enzymatic reaction. The inhibition of cyanide is competitive with formate and reversible. Its function is as follows. Catalyzes the NAD(+)-dependent oxidation of formate to carbon dioxide. Formate oxidation is the final step in the methanol oxidation pathway in methylotrophic microorganisms. Has a role in the detoxification of exogenous formate in non-methylotrophic organisms. The sequence is that of Formate dehydrogenase from Candida boidinii (Yeast).